A 288-amino-acid polypeptide reads, in one-letter code: Formamidopyrimidine-DNA glycosylase (288 aa).

Pro2 (schiff-base intermediate with DNA) is an active-site residue. The Proton donor role is filled by Glu3. Lys58 functions as the Proton donor; for beta-elimination activity in the catalytic mechanism. DNA-binding residues include His99, Arg118, and Lys161. The FPG-type zinc finger occupies 252–288; that stretch reads RVYDREAEPCPREGCGGTIKRIVQAGRSTFFCAKCQR. Arg278 (proton donor; for delta-elimination activity) is an active-site residue.

It belongs to the FPG family. Monomer. Requires Zn(2+) as cofactor.

It catalyses the reaction Hydrolysis of DNA containing ring-opened 7-methylguanine residues, releasing 2,6-diamino-4-hydroxy-5-(N-methyl)formamidopyrimidine.. The catalysed reaction is 2'-deoxyribonucleotide-(2'-deoxyribose 5'-phosphate)-2'-deoxyribonucleotide-DNA = a 3'-end 2'-deoxyribonucleotide-(2,3-dehydro-2,3-deoxyribose 5'-phosphate)-DNA + a 5'-end 5'-phospho-2'-deoxyribonucleoside-DNA + H(+). Its function is as follows. Involved in base excision repair of DNA damaged by oxidation or by mutagenic agents. Acts as a DNA glycosylase that recognizes and removes damaged bases. Has a preference for oxidized purines, such as 7,8-dihydro-8-oxoguanine (8-oxoG). Has AP (apurinic/apyrimidinic) lyase activity and introduces nicks in the DNA strand. Cleaves the DNA backbone by beta-delta elimination to generate a single-strand break at the site of the removed base with both 3'- and 5'-phosphates. The polypeptide is Formamidopyrimidine-DNA glycosylase (Beijerinckia indica subsp. indica (strain ATCC 9039 / DSM 1715 / NCIMB 8712)).